The chain runs to 430 residues: C4-dicarboxylate transport protein (430 aa).

The next 8 helical transmembrane spans lie at 9–29 (VLYV…HFYP), 45–65 (LIKM…IAGM), 79–99 (LLYF…ATHL), 149–169 (GEIL…AHLG), 185–205 (VLFG…FGAM), 223–243 (LIGT…GAIA), 308–328 (IYMT…LTWM), and 356–376 (AATL…ILGI).

This sequence belongs to the dicarboxylate/amino acid:cation symporter (DAACS) (TC 2.A.23) family.

It localises to the cell inner membrane. Functionally, responsible for the transport of dicarboxylates such as succinate, fumarate, and malate from the periplasm across the membrane. The chain is C4-dicarboxylate transport protein from Burkholderia orbicola (strain MC0-3).